The chain runs to 260 residues: Indole-3-glycerol phosphate synthase (260 aa).

It belongs to the TrpC family.

The enzyme catalyses 1-(2-carboxyphenylamino)-1-deoxy-D-ribulose 5-phosphate + H(+) = (1S,2R)-1-C-(indol-3-yl)glycerol 3-phosphate + CO2 + H2O. It participates in amino-acid biosynthesis; L-tryptophan biosynthesis; L-tryptophan from chorismate: step 4/5. This chain is Indole-3-glycerol phosphate synthase, found in Acetivibrio thermocellus (strain ATCC 27405 / DSM 1237 / JCM 9322 / NBRC 103400 / NCIMB 10682 / NRRL B-4536 / VPI 7372) (Clostridium thermocellum).